The chain runs to 1399 residues: DNA-directed RNA polymerase subunit beta' (1399 aa).

Residues cysteine 70, cysteine 72, cysteine 85, and cysteine 88 each contribute to the Zn(2+) site. The Mg(2+) site is built by aspartate 460, aspartate 462, and aspartate 464. Zn(2+) contacts are provided by cysteine 814, cysteine 888, cysteine 895, and cysteine 898.

This sequence belongs to the RNA polymerase beta' chain family. The RNAP catalytic core consists of 2 alpha, 1 beta, 1 beta' and 1 omega subunit. When a sigma factor is associated with the core the holoenzyme is formed, which can initiate transcription. Requires Mg(2+) as cofactor. Zn(2+) serves as cofactor.

The enzyme catalyses RNA(n) + a ribonucleoside 5'-triphosphate = RNA(n+1) + diphosphate. Its function is as follows. DNA-dependent RNA polymerase catalyzes the transcription of DNA into RNA using the four ribonucleoside triphosphates as substrates. This is DNA-directed RNA polymerase subunit beta' from Pseudomonas putida (strain ATCC 700007 / DSM 6899 / JCM 31910 / BCRC 17059 / LMG 24140 / F1).